The chain runs to 177 residues: Translation initiation factor IF-3 (177 aa).

This sequence belongs to the IF-3 family. In terms of assembly, monomer.

It is found in the cytoplasm. Its function is as follows. IF-3 binds to the 30S ribosomal subunit and shifts the equilibrium between 70S ribosomes and their 50S and 30S subunits in favor of the free subunits, thus enhancing the availability of 30S subunits on which protein synthesis initiation begins. The polypeptide is Translation initiation factor IF-3 (Nitratiruptor sp. (strain SB155-2)).